The chain runs to 348 residues: Methylthioribose-1-phosphate isomerase (348 aa).

Substrate-binding positions include 47-49, R90, and Q196; that span reads RGA. D237 serves as the catalytic Proton donor. 247–248 contributes to the substrate binding site; that stretch reads NK.

Belongs to the eIF-2B alpha/beta/delta subunits family. MtnA subfamily.

The catalysed reaction is 5-(methylsulfanyl)-alpha-D-ribose 1-phosphate = 5-(methylsulfanyl)-D-ribulose 1-phosphate. It participates in amino-acid biosynthesis; L-methionine biosynthesis via salvage pathway; L-methionine from S-methyl-5-thio-alpha-D-ribose 1-phosphate: step 1/6. Catalyzes the interconversion of methylthioribose-1-phosphate (MTR-1-P) into methylthioribulose-1-phosphate (MTRu-1-P). The protein is Methylthioribose-1-phosphate isomerase of Synechococcus sp. (strain ATCC 27144 / PCC 6301 / SAUG 1402/1) (Anacystis nidulans).